Consider the following 300-residue polypeptide: 33 kDa chaperonin (300 aa).

2 disulfide bridges follow: C235–C237 and C269–C272.

This sequence belongs to the HSP33 family. In terms of processing, under oxidizing conditions two disulfide bonds are formed involving the reactive cysteines. Under reducing conditions zinc is bound to the reactive cysteines and the protein is inactive.

It is found in the cytoplasm. Redox regulated molecular chaperone. Protects both thermally unfolding and oxidatively damaged proteins from irreversible aggregation. Plays an important role in the bacterial defense system toward oxidative stress. The sequence is that of 33 kDa chaperonin from Pseudomonas syringae pv. tomato (strain ATCC BAA-871 / DC3000).